The primary structure comprises 695 residues: Potassium voltage-gated channel subfamily KQT member 4 (695 aa).

The segment at 1-21 (MAEAPPRRLGLGPPPGDAPRA) is disordered. Topologically, residues 1 to 96 (MAEAPPRRLG…VYNVLERPRG (96 aa)) are cytoplasmic. Arg-93 is an a 1,2-diacyl-sn-glycero-3-phospho-(1D-myo-inositol-4,5-bisphosphate) binding site. Residues 97 to 118 (WAFVYHVFIFLLVFSCLVLSVL) traverse the membrane as a helical segment. The Extracellular portion of the chain corresponds to 119–129 (STIQEHQELAN). Residues 130–152 (ECLLILEFVMIVVFGLEYIVRVW) form a helical membrane-spanning segment. The Cytoplasmic segment spans residues 153 to 168 (SAGCCCRYRGWQGRFR). Residues 169 to 191 (FARKPFCVIDFIVFVASVAVIAA) form a helical membrane-spanning segment. Lys-172 contributes to the a 1,2-diacyl-sn-glycero-3-phospho-(1D-myo-inositol-4,5-bisphosphate) binding site. At 192–202 (GTQGNIFATSA) the chain is on the extracellular side. A helical; Voltage-sensor transmembrane segment spans residues 203-223 (LRSMRFLQILRMVRMDRRGGT). Arg-219, Arg-220, Lys-225, and Ser-235 together coordinate a 1,2-diacyl-sn-glycero-3-phospho-(1D-myo-inositol-4,5-bisphosphate). Residues 224–235 (WKLLGSVVYAHS) lie on the Cytoplasmic side of the membrane. The helical transmembrane segment at 236 to 258 (KELITAWYIGFLVLIFASFLVYL) threads the bilayer. The Extracellular portion of the chain corresponds to 259 to 270 (AEKDANSDFSSY). An intramembrane region (pore-forming) is located at residues 271–292 (ADSLWWGTITLTTIGYGDKTPH). Residue Thr-293 is a topological domain, extracellular. A helical transmembrane segment spans residues 294-322 (WLGRVLAAGFALLGISFFALPAGILGSGF). At 323–695 (ALKVQEQHRQ…ISRSVSTNMD (373 aa)) the chain is on the cytoplasmic side. Residues His-330 and Lys-333 each contribute to the a 1,2-diacyl-sn-glycero-3-phospho-(1D-myo-inositol-4,5-bisphosphate) site. Residues 342–351 (AANLIQAAWR) are interaction with CALM. Disordered stretches follow at residues 400–480 (RRAP…TKVQ) and 496–515 (RLKPRTSAEDAPSEEVAEEK). Polar residues-rich tracts occupy residues 443–452 (GSSQRRTGPS) and 463–480 (TSPSSEQVGEATSPTKVQ). The interval 535-549 (RSIRILKFLVAKRKF) is interaction with CALM. The tract at residues 546 to 650 (KRKFKETLRP…SRCLRSGTSA (105 aa)) is C-terminal assembly domain (tetramerization). A disordered region spans residues 587–606 (VGRGPGDRKAREKGDKGPSD). The segment covering 591-605 (PGDRKAREKGDKGPS) has biased composition (basic and acidic residues). The stretch at 615 to 636 (MMGRVVKVEKQVQSIEHKLDLL) forms a coiled coil.

This sequence belongs to the potassium channel family. KQT (TC 1.A.1.15) subfamily. Kv7.4/KCNQ4 sub-subfamily. In terms of assembly, homotetramer. Interacts (via C-terminus) with calmodulin; forms a heterooctameric structure (with 4:4 KCNQ1:CALM stoichiometry); the interaction is calcium-independent, constitutive, participates in the proper assembly of a functional channel. The interaction with calcium-free CALM controls channel trafficking whereas interaction with calcium-bound CALM regulates channel gating. May form a functional heteromultimeric channel with KCNQ3. Interacts with HSP90AB1; promotes cell surface expression of KCNQ4. In terms of tissue distribution, expressed in the outer, but not the inner, sensory hair cells of the cochlea. Slightly expressed in heart, brain and skeletal muscle.

The protein resides in the basal cell membrane. The enzyme catalyses K(+)(in) = K(+)(out). Its activity is regulated as follows. Two molecules of phosphatidylinositol-4,5-bisphosphate (PIP2-I and PIP2-II) are essential to activate KCNQ4 channel by inducing the coupling of the voltage-sensing domain (VSD) and the pore-forming domain (PD). Upon channel activation, PIP2-I and PIP2-II disrupt the VSD-calmodulin/CALM interaction, causing the release of CALM from the VSD which triggers the opening of the gate. Calcium suppresses KCNQ4 channel current through calcium-bound CALM C-terminus. Therefore CALM acts as calcium sensor that controls channel activity. ML213 potentiates KCNQ4 channel. KCNQ4 channel is blocked by linopirdin, XE991 and bepridil, whereas clofilium is without significant effect. Muscarinic agonist oxotremorine-M strongly suppress KCNQ4 current in CHO cells in which cloned KCNQ4 channels were coexpressed with M1 muscarinic receptors. Pore-forming subunit of the voltage-gated potassium (Kv) channel involved in the regulation of sensory cells excitability in the cochlea. KCNQ4/Kv7.4 channel is composed of 4 pore-forming subunits assembled as tetramers. Promotes the outflow of potassium ions in the repolarization phase of action potential which plays a role in regulating membrane potential of excitable cells. The channel conducts a slowly activating and deactivating current. Current often shows some inward rectification at positive potentials. Channel may be selectively permeable in vitro to other cations besides potassium, in decreasing order of affinity K(+) = Rb(+) &gt; Cs(+) &gt; Na(+). Important for normal physiological function of inner ear such as sensory perception of sound. This chain is Potassium voltage-gated channel subfamily KQT member 4, found in Homo sapiens (Human).